A 446-amino-acid chain; its full sequence is Deoxyguanosinetriphosphate triphosphohydrolase-like protein (446 aa).

Residues 1–28 are disordered; it reads MSSSVWQERRHGEDKQRRNDHRSPFQRD. Residues 7-28 show a composition bias toward basic and acidic residues; that stretch reads QERRHGEDKQRRNDHRSPFQRD. Residues 59-252 form the HD domain; the sequence is RLTHSLEVSQ…MELADDIAYA (194 aa).

This sequence belongs to the dGTPase family. Type 2 subfamily.

The chain is Deoxyguanosinetriphosphate triphosphohydrolase-like protein from Shewanella sp. (strain MR-7).